We begin with the raw amino-acid sequence, 514 residues long: 2,3-bisphosphoglycerate-independent phosphoglycerate mutase (514 aa).

Mn(2+)-binding residues include Asp-12 and Ser-62. The active-site Phosphoserine intermediate is Ser-62. Residues His-123, 153 to 154 (RD), Arg-185, Arg-191, 260 to 263 (RPDR), and Lys-335 each bind substrate. Residues Asp-402, His-406, Asp-443, His-444, and His-462 each contribute to the Mn(2+) site.

It belongs to the BPG-independent phosphoglycerate mutase family. As to quaternary structure, monomer. It depends on Mn(2+) as a cofactor.

The enzyme catalyses (2R)-2-phosphoglycerate = (2R)-3-phosphoglycerate. Its pathway is carbohydrate degradation; glycolysis; pyruvate from D-glyceraldehyde 3-phosphate: step 3/5. Its function is as follows. Catalyzes the interconversion of 2-phosphoglycerate and 3-phosphoglycerate. The sequence is that of 2,3-bisphosphoglycerate-independent phosphoglycerate mutase from Lachnoclostridium phytofermentans (strain ATCC 700394 / DSM 18823 / ISDg) (Clostridium phytofermentans).